We begin with the raw amino-acid sequence, 272 residues long: MNIGNLIGIIILFLFIGYFIGNILFGILISKSQGVDIRTLGSGNVGATNVTRNLGRISGAIVMVLDFFKSWFSTFVCLLIYKALRYSIGDESAYANAGVIIYLGGFAAIIGHCFPCFYFYTLFKTKFNFEEAKKYSGGKGVSSAAGFAASISPWMFFICFVLFWSICLISKYVSLASIVTVFLLPIWSLIPHLNYFYMLDVAQANINPIPPFNRPFEIAAIFNYSLNWWYILVTFLLELLTAVLVIYRHKENIVRLIKGEERKAFAKKTNTH.

Helical transmembrane passes span 9–29 (IIILFLFIGYFIGNILFGILI), 60–80 (AIVMVLDFFKSWFSTFVCLLI), 99–119 (VIIYLGGFAAIIGHCFPCFYF), 149–169 (ASISPWMFFICFVLFWSICLI), 173–193 (VSLASIVTVFLLPIWSLIPHL), and 226–246 (LNWWYILVTFLLELLTAVLVI).

The protein belongs to the PlsY family. In terms of assembly, probably interacts with PlsX.

The protein resides in the cell membrane. The enzyme catalyses an acyl phosphate + sn-glycerol 3-phosphate = a 1-acyl-sn-glycero-3-phosphate + phosphate. The protein operates within lipid metabolism; phospholipid metabolism. In terms of biological role, catalyzes the transfer of an acyl group from acyl-phosphate (acyl-PO(4)) to glycerol-3-phosphate (G3P) to form lysophosphatidic acid (LPA). This enzyme utilizes acyl-phosphate as fatty acyl donor, but not acyl-CoA or acyl-ACP. In Malacoplasma penetrans (strain HF-2) (Mycoplasma penetrans), this protein is Glycerol-3-phosphate acyltransferase.